The sequence spans 175 residues: Peptide methionine sulfoxide reductase MsrA (175 aa).

Cys10 is a catalytic residue.

This sequence belongs to the MsrA Met sulfoxide reductase family.

The enzyme catalyses L-methionyl-[protein] + [thioredoxin]-disulfide + H2O = L-methionyl-(S)-S-oxide-[protein] + [thioredoxin]-dithiol. It carries out the reaction [thioredoxin]-disulfide + L-methionine + H2O = L-methionine (S)-S-oxide + [thioredoxin]-dithiol. In terms of biological role, has an important function as a repair enzyme for proteins that have been inactivated by oxidation. Catalyzes the reversible oxidation-reduction of methionine sulfoxide in proteins to methionine. The chain is Peptide methionine sulfoxide reductase MsrA from Clavibacter sepedonicus (Clavibacter michiganensis subsp. sepedonicus).